A 506-amino-acid chain; its full sequence is Maturase K (506 aa).

Belongs to the intron maturase 2 family. MatK subfamily.

Its subcellular location is the plastid. The protein resides in the chloroplast. Usually encoded in the trnK tRNA gene intron. Probably assists in splicing its own and other chloroplast group II introns. The sequence is that of Maturase K from Trifolium hirtum (Rose clover).